The following is a 251-amino-acid chain: Aspartate/glutamate leucyltransferase (251 aa).

The protein belongs to the R-transferase family. Bpt subfamily.

The protein localises to the cytoplasm. The catalysed reaction is N-terminal L-glutamyl-[protein] + L-leucyl-tRNA(Leu) = N-terminal L-leucyl-L-glutamyl-[protein] + tRNA(Leu) + H(+). The enzyme catalyses N-terminal L-aspartyl-[protein] + L-leucyl-tRNA(Leu) = N-terminal L-leucyl-L-aspartyl-[protein] + tRNA(Leu) + H(+). In terms of biological role, functions in the N-end rule pathway of protein degradation where it conjugates Leu from its aminoacyl-tRNA to the N-termini of proteins containing an N-terminal aspartate or glutamate. This chain is Aspartate/glutamate leucyltransferase, found in Xanthomonas oryzae pv. oryzae (strain KACC10331 / KXO85).